A 132-amino-acid polypeptide reads, in one-letter code: UPF0102 protein Ajs_0414 (132 aa).

Positions 1-23 (MGFLGKKVNGSAPARTTRAAGQA) are disordered.

This sequence belongs to the UPF0102 family.

This chain is UPF0102 protein Ajs_0414, found in Acidovorax sp. (strain JS42).